A 437-amino-acid chain; its full sequence is Tol-Pal system protein TolB (437 aa).

A signal peptide spans 1–30 (MLPTPSRSHKLSGYAAVLFFLWLVCSPAQA). The segment covering 410 to 423 (SDGRTRQQLSTQTG) has biased composition (polar residues). Positions 410-437 (SDGRTRQQLSTQTGDIREPAWGPLRRLQ) are disordered.

The protein belongs to the TolB family. As to quaternary structure, the Tol-Pal system is composed of five core proteins: the inner membrane proteins TolA, TolQ and TolR, the periplasmic protein TolB and the outer membrane protein Pal. They form a network linking the inner and outer membranes and the peptidoglycan layer.

Its subcellular location is the periplasm. Part of the Tol-Pal system, which plays a role in outer membrane invagination during cell division and is important for maintaining outer membrane integrity. The sequence is that of Tol-Pal system protein TolB from Nitrosospira multiformis (strain ATCC 25196 / NCIMB 11849 / C 71).